The sequence spans 492 residues: E1B 55 kDa protein (492 aa).

The segment at 22-112 (ENMEGSQDED…ERNPSGNNSR (91 aa)) is disordered. Residues 34-44 (RLLASAASGSS) show a composition bias toward low complexity. Residues S486 and S487 each carry the phosphoserine modification. T491 is subject to Phosphothreonine.

The protein belongs to the adenoviridae E1B 55 kDa protein family. In terms of assembly, interacts with host PML-4 and PML-5; this interaction promotes efficient subnuclear targeting of E1B-55K to PML nuclear bodies. Interacts with E4-ORF3 protein. Interacts with E4-ORF6 protein.

The protein localises to the host nucleus. The protein resides in the host cytoplasm. Plays a major role to prevent cellular inhibition of viral genome replication. Assembles an SCF-like E3 ubiquitin ligase complex based on the cellular proteins ELOB, ELOC, CUL5 and RBX1, in cooperation with viral E4orf6. This viral RING-type ligase ubiquitinates cellular substrates and targets them to proteasomal degradation: TP53/p53, LIG4, MRE11-RAD50-NBS1 (MRN) complex, ITGA3, DAXX and BLM. E1B-55K probably acts as the substrate-specific adapter of the SCF-like E3 ubiquitin ligase complex. Degradation of host TP53/p53 activity is essential for preventing E1A-induced TP53 accumulation that would otherwise lead to cell apoptosis and growth arrest. E1B-55K also inactivates TP53 transcription-factor activity by binding its transactivation domain. E1B-55K also functions as a SUMO1 E3 ligase for TP53 which causes the latter to be sequestered in promyelocytic leukemia (PML) nuclear bodies thereby contributing to maximal inhibition of TP53 function. This Human adenovirus B serotype 7 (HAdV-7) protein is E1B 55 kDa protein.